Consider the following 2799-residue polypeptide: E3 ubiquitin-protein ligase UBR5 (2799 aa).

Residue threonine 2 is modified to N-acetylthreonine. Basic and acidic residues predominate over residues 77–88 (DRLELGKPDNND). The segment at 77–175 (DRLELGKPDN…DRGSGLLGSQ (99 aa)) is disordered. Residues 89-110 (GSKLNSNSGAGRTSRPGRTSDS) are compositionally biased toward polar residues. Serine 110 carries the post-translational modification Phosphoserine. Residues 135–144 (GVGGSGGGSS) show a composition bias toward gly residues. The UBA domain maps to 184 to 226 (VIPEELISQAQVVLQGKSRSVIIRELQRTNLDVNLAVNNLLSR). Serine 327 bears the Phosphoserine mark. Residues 328–347 (FDNERGSTSKEGEPNLDKKN) are compositionally biased toward basic and acidic residues. The tract at residues 328-352 (FDNERGSTSKEGEPNLDKKNTPVQS) is disordered. Phosphoserine occurs at positions 352 and 578. The disordered stretch occupies residues 579–648 (PESLKNMEKA…APKEEEKVNE (70 aa)). Residues 583 to 604 (KNMEKASKTTEAKPESKQEPVK) are compositionally biased toward basic and acidic residues. Serine 612 is subject to Phosphoserine. A compositionally biased stretch (low complexity) spans 614–628 (ASTCSDASSIASSAS). Residue threonine 637 is modified to Phosphothreonine. Phosphoserine occurs at positions 808, 928, and 1018. Disordered regions lie at residues 999-1031 (AGLG…PDPP) and 1052-1075 (TAAT…EPSV). Residues 1017-1031 (VSPPIAPPSWVPDPP) show a composition bias toward pro residues. Residues 1052-1073 (TAATGTGQGPSTSTIPGPSTEP) show a composition bias toward polar residues. Phosphothreonine occurs at positions 1115 and 1135. The UBR-type zinc finger occupies 1177–1245 (DTCSFTWTGA…EKCKCKTLIA (69 aa)). 8 residues coordinate Zn(2+): cysteine 1179, cysteine 1196, cysteine 1199, cysteine 1208, cysteine 1211, cysteine 1215, histidine 1216, and histidine 1219. Serine 1227 carries the phosphoserine modification. Zn(2+) is bound by residues cysteine 1232, cysteine 1234, and cysteine 1240. A disordered region spans residues 1299–1318 (REDRNRKTASPEDSDMPDHD). A phosphoserine mark is found at serine 1308, serine 1355, serine 1375, and serine 1481. Positions 1515 to 1740 (SVEPLPPRPS…PSSTSTPAAS (226 aa)) are disordered. A compositionally biased stretch (low complexity) spans 1524 to 1537 (SSDQSSSSSQSQSS). Residues 1538–1553 (YIIRNPQQRRISQSQP) are compositionally biased toward polar residues. Phosphoserine is present on serine 1549. Composition is skewed to acidic residues over residues 1559 to 1574 (EEQD…EVEV) and 1605 to 1614 (HDEDGSDMEL). Over residues 1629–1638 (NHSNQDNASG) the composition is skewed to polar residues. 3 stretches are compositionally biased toward low complexity: residues 1641-1657 (SVVT…ASSV), 1668-1681 (SNDS…SSQS), and 1726-1740 (AAST…PAAS). Residue threonine 1736 is modified to Phosphothreonine. Residue serine 1741 is modified to Phosphoserine. Tyrosine 1746 carries the post-translational modification Phosphotyrosine. Serine 1780 bears the Phosphoserine mark. The interval 1859–1890 (LASAGDPGHPNHPLHASQNSARRERMTAREEA) is disordered. Residues 1879–1890 (ARRERMTAREEA) are compositionally biased toward basic and acidic residues. Phosphothreonine is present on threonine 1969. Residues 1984 to 2021 (GIDNEDSEHENDDDTNQSATLNDKDDDSLPAETGQNHP) are disordered. Acidic residues predominate over residues 1985 to 1998 (IDNEDSEHENDDDT). 3 positions are modified to phosphoserine: serine 1990, serine 2026, and serine 2028. Residue threonine 2030 is modified to Phosphothreonine. Residue serine 2076 is modified to Phosphoserine. The disordered stretch occupies residues 2117–2142 (RQKKEGEEQPVLPEETESSKPGPSAH). At threonine 2213 the chain carries Phosphothreonine. A phosphoserine mark is found at serine 2241 and serine 2289. The segment at 2323 to 2392 (HTSLMQRLRN…PSDDPEPLPA (70 aa)) is disordered. 2 stretches are compositionally biased toward basic and acidic residues: residues 2332–2348 (NRGE…EMRR) and 2356–2368 (SRRD…RRQL). In terms of domain architecture, PABC spans 2377-2454 (PASEGNPSDD…AMELIIAHGR (78 aa)). The HECT domain maps to 2462–2799 (LDLGLVDSSE…AIKTKNFGFV (338 aa)). Residues serine 2469, serine 2484, and serine 2486 each carry the phosphoserine modification. A disordered region spans residues 2473 to 2493 (VQQENRKRHGSSRSVVDMDLD). Cysteine 2768 (glycyl thioester intermediate) is an active-site residue.

The protein belongs to the UBR5 family. In terms of assembly, homotetramer; composed of a dimer of dimers. Associates with CDK9 and TFIIS/TCEA1 and forms a transcription regulatory complex made of CDK9, RNAP II, UBR5 and TFIIS/TCEA1 that can stimulate target gene transcription (e.g. gamma fibrinogen/FGG) by recruiting their promoters. Associates with the E3 ligase complex containing DYRK2, EDD/UBR5, DDB1 and DCAF1 proteins (EDVP complex). Binds TOPBP1. Interacts with PIH1D1. Interacts with CIB1. As to quaternary structure, (Microbial infection) Interacts with human T-cell leukemia virus 1/HTLV-1 protein HBZ; this interaction modulates HBZ stability. As to expression, widely expressed. Most abundant in testis and expressed at high levels in brain, pituitary and kidney.

The protein localises to the nucleus. The protein resides in the cytoplasm. The enzyme catalyses S-ubiquitinyl-[E2 ubiquitin-conjugating enzyme]-L-cysteine + [acceptor protein]-L-lysine = [E2 ubiquitin-conjugating enzyme]-L-cysteine + N(6)-ubiquitinyl-[acceptor protein]-L-lysine.. Its pathway is protein modification; protein ubiquitination. Functionally, E3 ubiquitin-protein ligase involved in different protein quality control pathways in the cytoplasm and nucleus. Mainly acts as a ubiquitin chain elongator that extends pre-ubiquitinated substrates. Component of the N-end rule pathway: ubiquitinates proteins bearing specific N-terminal residues that are destabilizing according to the N-end rule, leading to their degradation. Recognizes type-1 N-degrons, containing positively charged amino acids (Arg, Lys and His). Together with UBR4, part of a cytoplasm protein quality control pathway that prevents protein aggregation by catalyzing assembly of heterotypic 'Lys-11'-/'Lys-48'-linked branched ubiquitin chains on aggregated proteins, leading to substrate recognition by the segregase p97/VCP and degradation by the proteasome: UBR5 is probably branching multiple 'Lys-48'-linked chains of substrates initially modified with mixed conjugates by UBR4. Together with ITCH, catalyzes 'Lys-48'-/'Lys-63'-branched ubiquitination of TXNIP, leading to its degradation: UBR5 mediates branching of 'Lys-48'-linked chains of substrates initially modified with 'Lys-63'-linked conjugates by ITCH. Catalytic component of a nuclear protein quality control pathway that mediates ubiquitination and degradation of unpaired transcription factors (i.e. transcription factors that are not assembled into functional multiprotein complexes): specifically recognizes and binds degrons that are not accessible when transcription regulators are associated with their coactivators. Ubiquitinates various unpaired transcription regulator (MYC, SUPT4H1, SUPT5H, CDC20 and MCRS1), as well as ligand-bound nuclear receptors (ESR1, NR1H3, NR3C1, PGR, RARA, RXRA AND VDR) that are not associated with their nuclear receptor coactivators (NCOAs). Involved in maturation and/or transcriptional regulation of mRNA by mediating polyubiquitination and activation of CDK9. Also acts as a regulator of DNA damage response by acting as a suppressor of RNF168, an E3 ubiquitin-protein ligase that promotes accumulation of 'Lys-63'-linked histone H2A and H2AX at DNA damage sites, thereby acting as a guard against excessive spreading of ubiquitinated chromatin at damaged chromosomes. Regulates DNA topoisomerase II binding protein (TopBP1) in the DNA damage response. Ubiquitinates acetylated PCK1. Acts as a positive regulator of the canonical Wnt signaling pathway by mediating (1) ubiquitination and stabilization of CTNNB1, and (2) 'Lys-48'-linked ubiquitination and degradation of TLE3. Promotes disassembly of the mitotic checkpoint complex (MCC) from the APC/C complex by catalyzing ubiquitination of BUB1B, BUB3 and CDC20. Plays an essential role in extraembryonic development. Required for the maintenance of skeletal tissue homeostasis by acting as an inhibitor of hedgehog (HH) signaling. The sequence is that of E3 ubiquitin-protein ligase UBR5 (UBR5) from Homo sapiens (Human).